Reading from the N-terminus, the 274-residue chain is uncharacterized protein (274 aa).

Positions 1 to 19 (MKRINKVLLSLLCLVIAYA) are cleaved as a signal peptide.

This is an uncharacterized protein from Rickettsia prowazekii (strain Madrid E).